Here is a 189-residue protein sequence, read N- to C-terminus: Movement protein (189 aa).

Belongs to the tombusvirus/aureusvirus movement protein p22 family.

The protein resides in the host membrane. In terms of biological role, transports viral genome to neighboring plant cells directly through plasmosdesmata, without any budding. The movement protein allows efficient cell to cell propagation, by bypassing the host cell wall barrier. The sequence is that of Movement protein from Cymbidium ringspot virus (CymRSV).